Reading from the N-terminus, the 101-residue chain is Trp operon repressor homolog (101 aa).

Residues 59–82 mediate DNA binding; the sequence is QREIAQKYGVSIAQITRGSNALKA.

It belongs to the TrpR family. As to quaternary structure, homodimer.

It is found in the cytoplasm. In terms of biological role, this protein is an aporepressor. When complexed with L-tryptophan it binds the operator region of the trp operon and prevents the initiation of transcription. This chain is Trp operon repressor homolog, found in Chlamydia caviae (strain ATCC VR-813 / DSM 19441 / 03DC25 / GPIC) (Chlamydophila caviae).